Reading from the N-terminus, the 77-residue chain is MIRTQVQLPDELYRDAKRVAHEHEMTLAEVVRRGLEHMVRIYPRRDAASDTWQPPTPRRLGPFRASEETWRELANEA.

Functionally, possibly the antitoxin component of a type II toxin-antitoxin (TA) system. Its cognate toxin is VapC24 (Potential). The sequence is that of Putative antitoxin VapB24 (vapB24) from Mycobacterium tuberculosis (strain CDC 1551 / Oshkosh).